Consider the following 90-residue polypeptide: Conotoxin Vc22.1 (90 aa).

Residues 1–18 form the signal peptide; it reads MMTRVFLAMFFLLVLTKG.

This sequence belongs to the E superfamily. Post-translationally, contains 4 disulfide bonds. As to expression, expressed by the venom duct.

Its subcellular location is the secreted. This is Conotoxin Vc22.1 from Conus victoriae (Queen Victoria cone).